We begin with the raw amino-acid sequence, 454 residues long: GA-binding protein alpha chain (454 aa).

Residues 168 to 251 enclose the PNT domain; that stretch reads AALEGYRKEQ…SHLELLRKYV (84 aa). The segment at 297 to 316 is disordered; it reads QRAPRISGEDRSSPGNRTGN. Ser303 is modified (phosphoserine). Residues 320 to 400 constitute a DNA-binding region (ETS); sequence IQLWQFLLEL…QGKRFVYKFV (81 aa).

Belongs to the ETS family. Heterotetramer of two alpha and two beta subunits.

The protein resides in the nucleus. Its function is as follows. Transcription factor capable of interacting with purine rich repeats (GA repeats). Positively regulates transcription of transcriptional repressor RHIT/ZNF205. (Microbial infection) Necessary for the expression of the Adenovirus E4 gene. This Homo sapiens (Human) protein is GA-binding protein alpha chain (GABPA).